The following is a 452-amino-acid chain: L-seryl-tRNA(Sec) selenium transferase (452 aa).

Lys-285 carries the post-translational modification N6-(pyridoxal phosphate)lysine.

It belongs to the SelA family. Requires pyridoxal 5'-phosphate as cofactor.

It is found in the cytoplasm. It carries out the reaction L-seryl-tRNA(Sec) + selenophosphate + H(+) = L-selenocysteinyl-tRNA(Sec) + phosphate. It participates in aminoacyl-tRNA biosynthesis; selenocysteinyl-tRNA(Sec) biosynthesis; selenocysteinyl-tRNA(Sec) from L-seryl-tRNA(Sec) (bacterial route): step 1/1. Converts seryl-tRNA(Sec) to selenocysteinyl-tRNA(Sec) required for selenoprotein biosynthesis. In Aquifex aeolicus (strain VF5), this protein is L-seryl-tRNA(Sec) selenium transferase.